A 154-amino-acid chain; its full sequence is Dau c 1 isoallergen Dau c 1.0301 (154 aa).

Belongs to the BetVI family. Expressed in roots.

This Daucus carota (Wild carrot) protein is Dau c 1 isoallergen Dau c 1.0301.